The primary structure comprises 475 residues: Phosphoglucosamine mutase (475 aa).

The active-site Phosphoserine intermediate is serine 126. The Mg(2+) site is built by serine 126, aspartate 265, aspartate 267, and aspartate 269. Phosphoserine is present on serine 126.

This sequence belongs to the phosphohexose mutase family. Requires Mg(2+) as cofactor. Post-translationally, activated by phosphorylation.

The catalysed reaction is alpha-D-glucosamine 1-phosphate = D-glucosamine 6-phosphate. Its function is as follows. Catalyzes the conversion of glucosamine-6-phosphate to glucosamine-1-phosphate. The chain is Phosphoglucosamine mutase from Synechococcus sp. (strain ATCC 27144 / PCC 6301 / SAUG 1402/1) (Anacystis nidulans).